Reading from the N-terminus, the 119-residue chain is Autophagy-related protein 8 (119 aa).

Gly-116 carries Phosphatidylethanolamine amidated glycine lipidation. Positions 117-119 (EAL) are cleaved as a propeptide — removed in mature form.

This sequence belongs to the ATG8 family. As to quaternary structure, conjugation to phosphatidylethanolamine (PE) leads to homodimerization. Interacts with ATG1, ATG3, ATG4, ATG7 and ATG12. The C-terminal Glu-117, Ala-118 and Leu-119 residues of ATG8 are removed by ATG4 to expose Gly-116 at the C-terminus. This Gly-116 forms then a thioester bond with ATG7 (E1-like activating enzyme) before being transferred to ATG3 (the specific E2 conjugating enzyme), in order to be finally amidated with phosphatidylethanolamine. This lipid modification anchors ATG8 to membranes and can be reversed by ATG4, releasing soluble ATG8.

The protein resides in the cytoplasmic vesicle. The protein localises to the cvt vesicle membrane. Its subcellular location is the autophagosome membrane. It localises to the vacuole membrane. Functionally, ubiquitin-like modifier involved in cytoplasm to vacuole transport (Cvt) vesicles and autophagosome formation. With ATG4, mediates the delivery of the vesicles and autophagosomes to the vacuole via the microtubule cytoskeleton. Required for selective autophagic degradation of the nucleus (nucleophagy) as well as for mitophagy which contributes to regulate mitochondrial quantity and quality by eliminating the mitochondria to a basal level to fulfill cellular energy requirements and preventing excess ROS production. Also participates in membrane fusion events that take place in the early secretory pathway. Also involved in endoplasmic reticulum-specific autophagic process and is essential for the survival of cells subjected to severe ER stress. The ATG8-PE conjugate mediates tethering between adjacent membranes and stimulates membrane hemifusion, leading to expansion of the autophagosomal membrane during autophagy. Moreover not only conjugation, but also subsequent ATG8-PE deconjugation is an important step required to facilitate multiple events during macroautophagy, and especially for efficient autophagosome biogenesis, the assembly of ATG9-containing tubulovesicular clusters into phagophores/autophagosomes, and for the disassembly of PAS-associated ATG components. Autophagy is required for conidiation, aerial mycelial growth, and pseudothecia formation, but not for host invasion. In Cochliobolus heterostrophus (strain C4 / ATCC 48331 / race T) (Southern corn leaf blight fungus), this protein is Autophagy-related protein 8.